Here is a 522-residue protein sequence, read N- to C-terminus: Amphoterin-induced protein 2 (522 aa).

A signal peptide spans 1–39; the sequence is MSLRVHTLPTLLGAVVRPGCRELLCLLMITVTVGPGASG. One can recognise an LRRNT domain in the interval 40 to 68; that stretch reads VCPTACICATDIVSCTNKNLSKVPGNLFR. Topologically, residues 40-398 are extracellular; it reads VCPTACICAT…RSHAHEAFNT (359 aa). Disulfide bonds link Cys-41-Cys-47 and Cys-45-Cys-54. The N-linked (GlcNAc...) asparagine glycan is linked to Asn-58. LRR repeat units follow at residues 69 to 90, 94 to 115, 118 to 139, 142 to 163, 166 to 187, and 193 to 214; these read LIKRLDLSYNRIGLLDSEWIPV, KLNTLILRHNNITSISTGSFST, NLKCLDLSSNKLKTVKNAVFQE, VLEVLLLYNNHISYLDPSAFGG, QLQKLYLSGNFLTQFPMDLYVG, and ELMFLDVSYNRIPSMPMHHINL. Asn-104 carries an N-linked (GlcNAc...) asparagine glycan. An LRRCT domain is found at 228–284; that stretch reads NPFVCDCSLYSLLVFWYRRHFSSVMDFKNDYTCRLWSDSRHSRQVLLLQDSFMNCSD. Disulfide bonds link Cys-232/Cys-260 and Cys-234/Cys-282. N-linked (GlcNAc...) asparagine glycans are attached at residues Asn-281, Asn-288, Asn-345, Asn-373, Asn-381, and Asn-384. In terms of domain architecture, Ig-like C2-type spans 289–379; the sequence is GSFRALGFIH…RLLNETVDVT (91 aa). Cysteines 310 and 363 form a disulfide. Residues 399–419 traverse the membrane as a helical segment; that stretch reads AFTTLAACVASIVLVLLYLYL. At 420–522 the chain is on the cytoplasmic side; the sequence is TPCPCKCKTK…FSDTPFVAST (103 aa). The interval 501 to 522 is disordered; it reads RGKSDSDSVNSVFSDTPFVAST.

It belongs to the immunoglobulin superfamily. AMIGO family. As to quaternary structure, binds itself as well as AMIGO1 and AMIGO3. In terms of tissue distribution, highest levels in breast, ovary, cervix, and uterus. Lower levels in lung, colon, and rectum. Differentially expressed in 56% of thyroid, 57% of pancreatic and 45% of stomach cancers.

The protein resides in the cell membrane. It localises to the nucleus. Required for depolarization-dependent survival of cultured cerebellar granule neurons. May mediate homophilic as well as heterophilic cell-cell interaction with AMIGO1 or AMIGO3. May contribute to signal transduction through its intracellular domain. May be required for tumorigenesis of a subset of gastric adenocarcinomas. The polypeptide is Amphoterin-induced protein 2 (Homo sapiens (Human)).